Consider the following 536-residue polypeptide: Light-independent protochlorophyllide reductase subunit B (536 aa).

Asp-36 contacts [4Fe-4S] cluster. Asp-292 serves as the catalytic Proton donor. 427-428 (GL) lines the substrate pocket. A disordered region spans residues 447 to 489 (QSHLGHLGGHQSQTEQQQSQAATNPSTQSNTDSSSEESPLWTP). Low complexity predominate over residues 448-469 (SHLGHLGGHQSQTEQQQSQAAT). Residues 470–483 (NPSTQSNTDSSSEE) are compositionally biased toward polar residues.

The protein belongs to the ChlB/BchB/BchZ family. As to quaternary structure, protochlorophyllide reductase is composed of three subunits; ChlL, ChlN and ChlB. Forms a heterotetramer of two ChlB and two ChlN subunits. Requires [4Fe-4S] cluster as cofactor.

The catalysed reaction is chlorophyllide a + oxidized 2[4Fe-4S]-[ferredoxin] + 2 ADP + 2 phosphate = protochlorophyllide a + reduced 2[4Fe-4S]-[ferredoxin] + 2 ATP + 2 H2O. It functions in the pathway porphyrin-containing compound metabolism; chlorophyll biosynthesis (light-independent). Its function is as follows. Component of the dark-operative protochlorophyllide reductase (DPOR) that uses Mg-ATP and reduced ferredoxin to reduce ring D of protochlorophyllide (Pchlide) to form chlorophyllide a (Chlide). This reaction is light-independent. The NB-protein (ChlN-ChlB) is the catalytic component of the complex. The polypeptide is Light-independent protochlorophyllide reductase subunit B (Prochlorococcus marinus (strain MIT 9303)).